A 424-amino-acid chain; its full sequence is MTKPVWIRHASQLATLAGGSSSPVVGAKMNELSIIEDGSIWLEDGVIQRVGTDEDLALHYRDRTHEAQIIDASGKLVTPGLIDPHTHLVHAGSRQNEFNMRLNGATYMEIMNNGGGIHSTTAATRAATHEELFAQSKQRLDQFLLHGVTTVEAKSGYGLTLEDELKQLEVAKQLNEAHPIDIVSTFMGAHAVPREYKENPDAFVDMVIEEMIPEVARRKLAVFNDVFCERGVFTPEQSRRILEAGVRHGLLPKIHADEIEPYEGAELAASVGAVSADHLLRASDKGIEQMAEAGVIAVLLPGTAFFLMAESANGRKMIDRGVAVAISTDCNPGSSPTVSLPLIMNLGCLKMGMTPAEVLTAATINAAHAIRCAHEVGSLEVGKKADVTIFDVPDFMTLQYRYGINHVNTVIKNGTIVVAEGRLA.

Fe(3+)-binding residues include His-85 and His-87. Residues His-85 and His-87 each coordinate Zn(2+). Arg-94, Tyr-157, and His-190 together coordinate 4-imidazolone-5-propanoate. Tyr-157 provides a ligand contact to N-formimidoyl-L-glutamate. His-255 is a Fe(3+) binding site. His-255 provides a ligand contact to Zn(2+). Glu-258 provides a ligand contact to 4-imidazolone-5-propanoate. Asp-329 is a binding site for Fe(3+). Asp-329 serves as a coordination point for Zn(2+). 2 residues coordinate N-formimidoyl-L-glutamate: Asn-331 and Gly-333. Ser-334 contacts 4-imidazolone-5-propanoate.

This sequence belongs to the metallo-dependent hydrolases superfamily. HutI family. Zn(2+) is required as a cofactor. Requires Fe(3+) as cofactor.

It localises to the cytoplasm. It catalyses the reaction 4-imidazolone-5-propanoate + H2O = N-formimidoyl-L-glutamate. Its pathway is amino-acid degradation; L-histidine degradation into L-glutamate; N-formimidoyl-L-glutamate from L-histidine: step 3/3. Catalyzes the hydrolytic cleavage of the carbon-nitrogen bond in imidazolone-5-propanoate to yield N-formimidoyl-L-glutamate. It is the third step in the universal histidine degradation pathway. The protein is Imidazolonepropionase of Brevibacillus brevis (strain 47 / JCM 6285 / NBRC 100599).